We begin with the raw amino-acid sequence, 1357 residues long: MAYSYTEKKRIRKDFSKLPDVMDVPYLLAIQLDSYREFLQAGATKDQFRDVGLHAAFKSVFPIISYSGNAALEYVGYRLGEPAFDVKECVLRGVTYAVPLRVKVRLIIFDKESSNKAIKDIKEQEVYMGEIPLMTENGTFVINGTERVIVSQLHRSPGVFFDHDRGKTHSSGKLLYSARIIPYRGSWLDFEFDPKDCVFVRIDRRRKLPASVLLRALGYTTEEVLDAFYTTNVFHVKGESLSLELVPQRLRGEIAVLDIQDDKGKVIVEQGRRITARHINQLEKAGIKELDVPLDYVLGRTTAKAIVHPATGEILAECNTELNTEILAKIAKAQVVRIETLYTNDIDCGPFVSDTLKIDSTSNQLEALVEIYRMMRPGEPPTKDAAETLFNNLFFSPERYDLSAVGRMKFNRRIGRTEIEGSGVLCKEDIVAVLKTLVDIRNGKGIVDDIDHLGNRRVRCVGEMAENQFRVGLVRVERAVKERLSMAESEGLMPQDLINAKPVAAAVKEFFGSSQLSQFMDQNNPLSEITHKRRVSALGPGGLTRERAGFEVRDVHPTHYGRVCPIETPEGPNIGLINSLAAYARTNQYGFLESPYRVVKDALVTDEIVFLSAIEEADHVIAQASATMNDKGQLVDELVAVRHLNEFTVKAPEDVTLMDVSPKQVVSVAASLIPFLEHDDANRALMGSNMQRQAVPTLRADKPLVGTGMERNVARDSGVCVVARRGGVIDSVDASRIVVRVADDEVETGEAGVDIYNLTKYTRSNQNTCINQRPLVSKGDRVQRSDIMADGPSTDMGELALGQNMRIAFMAWNGFNFEDSICLSERVVQEDRFTTIHIQELTCVARDTKLGPEEITADIPNVGEAALNKLDEAGIVYVGAEVGAGDILVGKVTPKGETQLTPEEKLLRAIFGEKASDVKDTSLRVPTGTKGTVIDVQVFTRDGVERDARALSIEKSQLDEIRKDLNEEFRIVEGATFERLRSALVGHKAEGGAGLKKGQEITDEVLDGLEHGQWFKLRMAEDALNEQLEKAQAYIVDRRRLLDDKFEDKKRKLQQGDDLAPGVLKIVKVYLAIRRRIQPGDKMAGRHGNKGVVSVIMPVEDMPHDANGTPVDVVLNPLGVPSRMNVGQILETHLGLAAKGLGEKINRMVEEQRKVAELRTFLDEIYNQIGGRNEDLDSFSDQEILDLANNLRGGVPMATPVFDGAKESEIKAMLKLADLPESGQMQLTDGRTGNKFERPVTVGYMYMLKLNHLVDDKMHARSTGSYSLVTQQPLGGKAQFGGQRFGEMEVWALEAYGAAYTLQEMLTVKSDDVNGRTKMYKNIVDGDHRMEPGMPESFNVLIKEIRSLGIDIDLETE.

The protein belongs to the RNA polymerase beta chain family. In terms of assembly, the RNAP catalytic core consists of 2 alpha, 1 beta, 1 beta' and 1 omega subunit. When a sigma factor is associated with the core the holoenzyme is formed, which can initiate transcription.

The enzyme catalyses RNA(n) + a ribonucleoside 5'-triphosphate = RNA(n+1) + diphosphate. Its function is as follows. DNA-dependent RNA polymerase catalyzes the transcription of DNA into RNA using the four ribonucleoside triphosphates as substrates. The protein is DNA-directed RNA polymerase subunit beta of Pseudomonas fluorescens (strain ATCC BAA-477 / NRRL B-23932 / Pf-5).